Consider the following 405-residue polypeptide: Accessory Sec system protein translocase subunit SecY2 (405 aa).

A run of 10 helical transmembrane segments spans residues 14–34, 63–83, 104–124, 131–151, 156–176, 191–211, 247–267, 285–305, 343–363, and 368–388; these read LFTLFLLFIYVLGSRIILPFV, LSIFSVGLSPWMSAMILWQMF, MYLTLMIAVIQSLAVSLRLPV, ILVVLMNTILLIAGTFFLVWL, ASMGIGGSIVILLSSMVLNIP, GIIVLLALLTLVFSYLLALMY, MYVMSFLSVPAYLFILLGFIF, PLWVYVYISVLFLFSIIFAFV, FSVIGGLFNVVMAGGPMLFVL, and LLRLAMIPGLFMMFGGMIFTI.

This sequence belongs to the SecY/SEC61-alpha family. SecY2 subfamily. In terms of assembly, component of the accessory SecA2/SecY2 protein translocase complex required to export cell wall proteins. May form heterotrimers with SecE and SecG subunits.

The protein localises to the cell membrane. In terms of biological role, part of the accessory SecA2/SecY2 system specifically required for export of possible cell wall proteins. The central subunit of a protein translocation channel. The chain is Accessory Sec system protein translocase subunit SecY2 from Streptococcus pneumoniae (strain CGSP14).